Reading from the N-terminus, the 569-residue chain is DNA-binding protein eta2 (569 aa).

2 disordered regions span residues 1–26 (MMLA…TLSC) and 133–159 (KRKI…AKKR). Positions 9–26 (INENQGTRSNLESPTLSC) are enriched in polar residues. Serine 21 bears the Phosphoserine mark. Myb-like domains are found at residues 322–371 (LDPK…RFVV) and 377–459 (ETID…EKTI). Positions 459–487 (IASYSSNQRQEEDQGKKRKKRKKKKSKGK) are disordered. The segment covering 474–487 (KKRKKRKKKKSKGK) has biased composition (basic residues).

The protein resides in the nucleus. This Schizosaccharomyces pombe (strain 972 / ATCC 24843) (Fission yeast) protein is DNA-binding protein eta2 (eta2).